The following is a 272-amino-acid chain: tRNA uridine(34) hydroxylase (272 aa).

The region spanning 121–217 (SRSDVYTIDT…YFKSTGNINN (97 aa)) is the Rhodanese domain. C177 (cysteine persulfide intermediate) is an active-site residue.

The protein belongs to the TrhO family.

It carries out the reaction uridine(34) in tRNA + AH2 + O2 = 5-hydroxyuridine(34) in tRNA + A + H2O. Catalyzes oxygen-dependent 5-hydroxyuridine (ho5U) modification at position 34 in tRNAs. This Ehrlichia ruminantium (strain Welgevonden) protein is tRNA uridine(34) hydroxylase.